A 174-amino-acid polypeptide reads, in one-letter code: Endoribonuclease YbeY (174 aa).

Zn(2+) is bound by residues His129, His133, and His139.

This sequence belongs to the endoribonuclease YbeY family. Zn(2+) serves as cofactor.

It is found in the cytoplasm. Its function is as follows. Single strand-specific metallo-endoribonuclease involved in late-stage 70S ribosome quality control and in maturation of the 3' terminus of the 16S rRNA. In Lactobacillus delbrueckii subsp. bulgaricus (strain ATCC 11842 / DSM 20081 / BCRC 10696 / JCM 1002 / NBRC 13953 / NCIMB 11778 / NCTC 12712 / WDCM 00102 / Lb 14), this protein is Endoribonuclease YbeY.